A 378-amino-acid chain; its full sequence is MSIPLPHAEFQWDHYDSKVNPVNGHVECTYRTLTCSWSAPRFVESPFLQVHGLAPGLNYGQQAFEGLLAHRTARNRILIFRPASHSSRFRHSASVVSMPPVPESLFLACVHMAVARNAEFVPPHNFAGNMYIRPLEFGSSAQIGLDVPDEFTFCVFVQPHVPLHGHTPLRALVAEEFDRAATRGTGNCKVGGNYGPVLKWSKDAKKPENGGWSALLHVDSKTQSYVDEFSAAALIGVKSPDQESTQVPILTVAHSEAAIHSITAESVVTIAQSFGWTVERRLVKLEELSSFSEVFAVGTAATIRPCSLIYHRSTGKHFTFTSDGPYYQRLWKTLSGIQKGEIEDIFQWCQDLRFEEFGERGHNGQPTADPTRVIEMPE.

R88 lines the pyridoxal 5'-phosphate pocket. K189 bears the N6-(pyridoxal phosphate)lysine mark. A pyridoxal 5'-phosphate-binding site is contributed by E228. The segment at 359 to 378 (ERGHNGQPTADPTRVIEMPE) is disordered.

Belongs to the class-IV pyridoxal-phosphate-dependent aminotransferase family. Pyridoxal 5'-phosphate serves as cofactor.

Its pathway is secondary metabolite biosynthesis. In terms of biological role, aminotransferase; part of the gene cluster that mediates the biosynthesis of the cyclic tetrapeptide apicidin F (APF). The non-ribosomal peptide synthetase apf1 incorporates four different amino acids to produce apicidin F: L-phenylalanine, D-pipecolic acid (D-pip), N-methoxy-L-tryptophan and L-2-aminooctanedioic acid. L-Phenylalanine is the only proteinogenic amino acid directly used by apf1. The 3 other apf1 substrates are non-proteinogenic and have to be modified by other enzymes of the cluster. Lysine is converted to delta-1-pyrroline-5-carboxylate (P5C) which is reduced to L-pipecolic acid (L-pip) by apf3. L-pip is epimerized to D-pip, probably by apf1 activity, prior to incorporation. L-Tryptophan is N-oxidyzed by one of the cytochrome P450 monooxygenases (apf7 or apf8), and further methylated at the hydroxy group by the O-methyltransferase apf6 to yield N-methoxy-L-tryptophan. The synthesis of the fourth apf1 substrate is more complex. The fatty acid synthase apf5 is involved in the synthesis of the octanoic acid backbone of L-2-aminooctanedioic acid by fixing one acetyl-CoA unit and three malonyl-CoA units. Then one of the cytochrome P450 monooxygenases (apf7 or apf8) may oxidize this backbone to 2-oxooctanoic acid. The aminotransferase apf4 is predicted to catalyze the exchange of the keto group with an amino group. The next step would be the oxidation of 2-aminooctanoic acid by one of the cytochrome P450 monooxygenases (apf7 or apf8). The last step is the oxidation of 2-amino-8-hydroxyoctanoic acid to 2-aminooctanedioic acid is catalyzed by the FAD-dependent monooxygenase apf9. This is Aminotransferase apf4 from Gibberella fujikuroi (strain CBS 195.34 / IMI 58289 / NRRL A-6831) (Bakanae and foot rot disease fungus).